The sequence spans 399 residues: Mycinamicin VI 2''-O-methyltransferase (399 aa).

S-adenosyl-L-methionine is bound by residues Thr173, 202-208 (EIGVGGY), Ser217, Asp234, 252-253 (DQ), and Asp275. Mg(2+) is bound at residue Asp275. The active-site Proton acceptor is His278. 2 residues coordinate Mg(2+): Glu303 and Asp304.

This sequence belongs to the methyltransferase OleY/MycE family. Homotetramer. The cofactor is Mg(2+).

The catalysed reaction is mycinamicin VI + S-adenosyl-L-methionine = mycinamicin III + S-adenosyl-L-homocysteine + H(+). It participates in antibiotic biosynthesis; mycinamicin biosynthesis. Functionally, O-methyltransferase that catalyzes the conversion of mycinamicin VI to mycinamicin III in the biosynthesis of mycinamicin, a 16-membered macrolide antibiotic. The protein is Mycinamicin VI 2''-O-methyltransferase (mycE) of Micromonospora griseorubida.